An 833-amino-acid chain; its full sequence is Kinesin-like protein KIFC3 (833 aa).

The segment at 19 to 74 (LWRVGRAPEPEPGMARPAPAPASPAARPFPHTGPGRLRTGRGKDTPVCGDEDSSAR) is disordered. The segment covering 30–48 (PGMARPAPAPASPAARPFP) has biased composition (low complexity). 2 coiled-coil regions span residues 102 to 362 (LTLQ…ENLA) and 395 to 432 (LLQE…LQLR). Positions 445–768 (NIRVIARVRP…LKFAERVRSV (324 aa)) constitute a Kinesin motor domain. ATP is bound at residue 528 to 535 (GQTGAGKT). Residues 786-833 (EHLEWEPACQTPQPSARAHSAPSSGTSSRPGSIRRKLQPSGKSRPLPV) form a disordered region. A compositionally biased stretch (polar residues) spans 806 to 815 (APSSGTSSRP). Residues serine 813 and serine 817 each carry the phosphoserine modification.

The protein belongs to the TRAFAC class myosin-kinesin ATPase superfamily. Kinesin family.

It is found in the cell junction. It localises to the adherens junction. The protein resides in the cytoplasm. The protein localises to the cytoskeleton. Its subcellular location is the microtubule organizing center. It is found in the centrosome. It localises to the cytoplasmic vesicle membrane. Minus-end microtubule-dependent motor protein. Involved in apically targeted transport. Required for zonula adherens maintenance. The chain is Kinesin-like protein KIFC3 (KIFC3) from Homo sapiens (Human).